We begin with the raw amino-acid sequence, 197 residues long: MKVYGLTGGIGSGKTTVRQLFEDEGVPTLDADQIAREVVAKNQPGLAEIERTFGSDYLTNGELNRAKLRELIFNDASAKQALEAILHPLIRQRTEQLIQQLKKQHPPAIVVEIPLLTETGKPNYVDEVIVLDLAPETQLKRAITRDQLPAEDIQKIIQQQATRAERLAVADIILNTEQPLETLRKDIQSLLHTHQNT.

One can recognise a DPCK domain in the interval 3–197; it reads VYGLTGGIGS…QSLLHTHQNT (195 aa). Residue 11 to 16 coordinates ATP; it reads GSGKTT.

It belongs to the CoaE family.

The protein resides in the cytoplasm. It catalyses the reaction 3'-dephospho-CoA + ATP = ADP + CoA + H(+). Its pathway is cofactor biosynthesis; coenzyme A biosynthesis; CoA from (R)-pantothenate: step 5/5. Functionally, catalyzes the phosphorylation of the 3'-hydroxyl group of dephosphocoenzyme A to form coenzyme A. In Hydrogenovibrio crunogenus (strain DSM 25203 / XCL-2) (Thiomicrospira crunogena), this protein is Dephospho-CoA kinase.